The primary structure comprises 492 residues: Cytochrome P450 2B12 (492 aa).

At Ser129 the chain carries Phosphoserine. Cys437 is a heme binding site.

Belongs to the cytochrome P450 family. Requires heme as cofactor. Preputial gland, but not in liver.

It localises to the endoplasmic reticulum membrane. It is found in the microsome membrane. The catalysed reaction is an organic molecule + reduced [NADPH--hemoprotein reductase] + O2 = an alcohol + oxidized [NADPH--hemoprotein reductase] + H2O + H(+). Its function is as follows. Cytochromes P450 are a group of heme-thiolate monooxygenases. In liver microsomes, this enzyme is involved in an NADPH-dependent electron transport pathway. This isozyme seems responsible for metabolism of 2,2',4,4',5,5'-hexachlorobiphenyl. In Rattus norvegicus (Rat), this protein is Cytochrome P450 2B12 (Cyp2b12).